The following is a 294-amino-acid chain: Sarcotoxin-2A (294 aa).

The first 22 residues, 1 to 22, serve as a signal peptide directing secretion; the sequence is MKSFVFFAACMAIIALSSLVQA. Positions 23 to 24 are cleaved as a propeptide — removed by a dipeptidylpeptidase; the sequence is YP. Gln25 bears the Pyrrolidone carboxylic acid mark. Arg293 is modified (arginine amide).

It belongs to the attacin/sarcotoxin-2 family. Synthesized by the fat body and is eventually secreted into the hemolymph.

It localises to the secreted. Its function is as follows. Sarcotoxin II is an antibacterial protein which plays a role in the inflammatory response of this insect. The main effect of sarcotoxin II on E.coli may be the inhibition of cell wall synthesis, including septum formation. The polypeptide is Sarcotoxin-2A (Sarcophaga peregrina (Flesh fly)).